Reading from the N-terminus, the 230-residue chain is Biosynthetic peptidoglycan transglycosylase (230 aa).

The chain crosses the membrane as a helical span at residues 10–30; sequence IFLFFIAVIFVYQFWIFSQIV.

This sequence belongs to the glycosyltransferase 51 family.

Its subcellular location is the cell inner membrane. The enzyme catalyses [GlcNAc-(1-&gt;4)-Mur2Ac(oyl-L-Ala-gamma-D-Glu-L-Lys-D-Ala-D-Ala)](n)-di-trans,octa-cis-undecaprenyl diphosphate + beta-D-GlcNAc-(1-&gt;4)-Mur2Ac(oyl-L-Ala-gamma-D-Glu-L-Lys-D-Ala-D-Ala)-di-trans,octa-cis-undecaprenyl diphosphate = [GlcNAc-(1-&gt;4)-Mur2Ac(oyl-L-Ala-gamma-D-Glu-L-Lys-D-Ala-D-Ala)](n+1)-di-trans,octa-cis-undecaprenyl diphosphate + di-trans,octa-cis-undecaprenyl diphosphate + H(+). The protein operates within cell wall biogenesis; peptidoglycan biosynthesis. Peptidoglycan polymerase that catalyzes glycan chain elongation from lipid-linked precursors. In Nitrosospira multiformis (strain ATCC 25196 / NCIMB 11849 / C 71), this protein is Biosynthetic peptidoglycan transglycosylase.